The following is a 291-amino-acid chain: Homeobox protein SIX2 (291 aa).

The segment at residues 124 to 183 (GEETSYCFKEKSRSVLREWYAHNPYPSPREKRELAEATGLTTTQVSNWFKNRRQRDRAAE) is a DNA-binding region (homeobox). The tract at residues 168–279 (VSNWFKNRRQ…HHHGLQDSIL (112 aa)) is disordered. Over residues 179 to 190 (DRAAEAKERENN) the composition is skewed to basic and acidic residues. Residues 224–233 (HSSSSPALLL) are compositionally biased toward low complexity. Positions 249–259 (PPGPSAVPVPV) are enriched in pro residues.

Belongs to the SIX/Sine oculis homeobox family. Interacts with TCF7L2; in a canonical Wnt signaling independent manner; prevents transcription of differentiation genes in cap mesenchyme. Interacts with OSR1; form a strong repressor complex with TCF7L2, TLE2 and TLE3 to prevent the activation of Wnt/beta-catenin target genes in the cap mesenchyme. Interacts with HOXA11, EYA1 and EYA3. As to expression, strongly expressed in skeletal muscle. Expressed in Wilms' tumor and in the cap mesenchyme of fetal kidney (at protein level).

It is found in the nucleus. Transcription factor that plays an important role in the development of several organs, including kidney, skull and stomach. During kidney development, maintains cap mesenchyme multipotent nephron progenitor cells in an undifferentiated state by opposing the inductive signals emanating from the ureteric bud and cooperates with WNT9B to promote renewing progenitor cells proliferation. Acts through its interaction with TCF7L2 and OSR1 in a canonical Wnt signaling independent manner preventing transcription of differentiation genes in cap mesenchyme such as WNT4. Also acts independently of OSR1 to activate expression of many cap mesenchyme genes, including itself, GDNF and OSR1. During craniofacial development plays a role in growth and elongation of the cranial base through regulation of chondrocyte differentiation. During stomach organogenesis, controls pyloric sphincter formation and mucosal growth through regulation of a gene network including NKX2-5, BMPR1B, BMP4, SOX9 and GREM1. During branchial arch development, acts to mediate HOXA2 control over the insulin-like growth factor pathway. May also be involved in limb tendon and ligament development. Plays a role in cell proliferation and migration. In Homo sapiens (Human), this protein is Homeobox protein SIX2 (SIX2).